A 960-amino-acid chain; its full sequence is Valine--tRNA ligase (960 aa).

The short motif at 42–52 (PNITGNLHMGH) is the 'HIGH' region element. The short motif at 553–557 (KMSKS) is the 'KMSKS' region element. K556 provides a ligand contact to ATP. Positions 879-950 (VLKAIDKEIE…LSQQLESLHD (72 aa)) form a coiled coil.

Belongs to the class-I aminoacyl-tRNA synthetase family. ValS type 1 subfamily. Monomer.

It localises to the cytoplasm. The catalysed reaction is tRNA(Val) + L-valine + ATP = L-valyl-tRNA(Val) + AMP + diphosphate. Functionally, catalyzes the attachment of valine to tRNA(Val). As ValRS can inadvertently accommodate and process structurally similar amino acids such as threonine, to avoid such errors, it has a 'posttransfer' editing activity that hydrolyzes mischarged Thr-tRNA(Val) in a tRNA-dependent manner. This Buchnera aphidicola subsp. Schizaphis graminum (strain Sg) protein is Valine--tRNA ligase.